Consider the following 803-residue polypeptide: Phosphoribosylformylglycinamidine synthase subunit PurL (803 aa).

The active site involves His65. Residues Tyr68 and Lys107 each coordinate ATP. Position 109 (Glu109) interacts with Mg(2+). Substrate is bound by residues 110-113 and Arg132; that span reads SHNH. The Proton acceptor role is filled by His111. Asp133 lines the Mg(2+) pocket. Gln256 is a substrate binding site. Asp284 contacts Mg(2+). 328–330 is a binding site for substrate; it reads ESQ. 2 residues coordinate ATP: Asn537 and Gly574. Asn575 contributes to the Mg(2+) binding site. Ser577 lines the substrate pocket.

This sequence belongs to the FGAMS family. In terms of assembly, monomer. Part of the FGAM synthase complex composed of 1 PurL, 1 PurQ and 2 PurS subunits.

It localises to the cytoplasm. The catalysed reaction is N(2)-formyl-N(1)-(5-phospho-beta-D-ribosyl)glycinamide + L-glutamine + ATP + H2O = 2-formamido-N(1)-(5-O-phospho-beta-D-ribosyl)acetamidine + L-glutamate + ADP + phosphate + H(+). It participates in purine metabolism; IMP biosynthesis via de novo pathway; 5-amino-1-(5-phospho-D-ribosyl)imidazole from N(2)-formyl-N(1)-(5-phospho-D-ribosyl)glycinamide: step 1/2. Functionally, part of the phosphoribosylformylglycinamidine synthase complex involved in the purines biosynthetic pathway. Catalyzes the ATP-dependent conversion of formylglycinamide ribonucleotide (FGAR) and glutamine to yield formylglycinamidine ribonucleotide (FGAM) and glutamate. The FGAM synthase complex is composed of three subunits. PurQ produces an ammonia molecule by converting glutamine to glutamate. PurL transfers the ammonia molecule to FGAR to form FGAM in an ATP-dependent manner. PurS interacts with PurQ and PurL and is thought to assist in the transfer of the ammonia molecule from PurQ to PurL. The protein is Phosphoribosylformylglycinamidine synthase subunit PurL of Prochlorococcus marinus (strain NATL2A).